We begin with the raw amino-acid sequence, 337 residues long: Visual pigment-like receptor peropsin (337 aa).

The Extracellular segment spans residues 1–26 (MLSEASDFNSSGSRSEGSVFSRTEHS). Residue N9 is glycosylated (N-linked (GlcNAc...) asparagine). Residues 27–49 (VIAAYLIVAGITSILSNVVVLGI) traverse the membrane as a helical segment. The Cytoplasmic portion of the chain corresponds to 50-61 (FIKYKELRTPTN). A helical membrane pass occupies residues 62–87 (AVIINLAFTDIGVSSIGYPMSAASDL). Residues 88 to 101 (HGSWKFGHAGCQIY) lie on the Extracellular side of the membrane. C98 and C175 are oxidised to a cystine. Residues 102 to 121 (AGLNIFFGMVSIGLLTVVAM) form a helical membrane-spanning segment. The Cytoplasmic segment spans residues 122-140 (DRYLTISCPDVGRRMTTNT). Residues 141–164 (YLSMILGAWINGLFWALMPIIGWA) traverse the membrane as a helical segment. The Extracellular portion of the chain corresponds to 165–188 (SYAPDPTGATCTINWRNNDTSFVS). The N-linked (GlcNAc...) asparagine glycan is linked to N182. Residues 189–212 (YTMMVIVVNFIVPLTVMFYCYYHV) form a helical membrane-spanning segment. Residues 213-240 (SRSLRLYAASDCTAHLHRDWADQADVTK) lie on the Cytoplasmic side of the membrane. Residues 241-264 (MSVIMILMFLLAWSPYSIVCLWAC) form a helical membrane-spanning segment. Topologically, residues 265-272 (FGNPKKIP) are extracellular. A helical membrane pass occupies residues 273–297 (PSMAIIAPLFAKSSTFYNPCIYVAA). K284 is subject to N6-(retinylidene)lysine. Over 298-337 (HKKFRKAMLAMFKCQPHLAVPEPSTLPMDMPQSSLAPVRI) the chain is Cytoplasmic.

Belongs to the G-protein coupled receptor 1 family. Opsin subfamily. In terms of tissue distribution, found only in the eye, where it is localized to the retinal pigment epithelium (RPE). In the RPE, it is localized to the microvilli that surround the photoreceptor outer segments.

The protein localises to the membrane. Functionally, may play a role in rpe physiology either by detecting light directly or by monitoring the concentration of retinoids or other photoreceptor-derived compounds. The chain is Visual pigment-like receptor peropsin (Rrh) from Mus musculus (Mouse).